The following is a 482-amino-acid chain: tRNA sulfurtransferase (482 aa).

A THUMP domain is found at 61–165 (DQILAILMQT…YDHLHQVLHR (105 aa)). Residues 183–184 (LI), K265, G287, and Q296 contribute to the ATP site. Cysteines 344 and 456 form a disulfide. In terms of domain architecture, Rhodanese spans 404 to 482 (IGDGAIVLDI…GYGNIKVYRP (79 aa)). The active-site Cysteine persulfide intermediate is the C456.

This sequence belongs to the ThiI family.

Its subcellular location is the cytoplasm. It carries out the reaction [ThiI sulfur-carrier protein]-S-sulfanyl-L-cysteine + a uridine in tRNA + 2 reduced [2Fe-2S]-[ferredoxin] + ATP + H(+) = [ThiI sulfur-carrier protein]-L-cysteine + a 4-thiouridine in tRNA + 2 oxidized [2Fe-2S]-[ferredoxin] + AMP + diphosphate. The enzyme catalyses [ThiS sulfur-carrier protein]-C-terminal Gly-Gly-AMP + S-sulfanyl-L-cysteinyl-[cysteine desulfurase] + AH2 = [ThiS sulfur-carrier protein]-C-terminal-Gly-aminoethanethioate + L-cysteinyl-[cysteine desulfurase] + A + AMP + 2 H(+). It participates in cofactor biosynthesis; thiamine diphosphate biosynthesis. Its function is as follows. Catalyzes the ATP-dependent transfer of a sulfur to tRNA to produce 4-thiouridine in position 8 of tRNAs, which functions as a near-UV photosensor. Also catalyzes the transfer of sulfur to the sulfur carrier protein ThiS, forming ThiS-thiocarboxylate. This is a step in the synthesis of thiazole, in the thiamine biosynthesis pathway. The sulfur is donated as persulfide by IscS. This is tRNA sulfurtransferase from Photobacterium profundum (strain SS9).